A 429-amino-acid chain; its full sequence is Ribosomal RNA small subunit methyltransferase B (429 aa).

Residues 254–260 (CAAPGGK), Asp-277, Asp-303, and Asp-322 contribute to the S-adenosyl-L-methionine site. Cys-375 serves as the catalytic Nucleophile.

The protein belongs to the class I-like SAM-binding methyltransferase superfamily. RsmB/NOP family.

The protein localises to the cytoplasm. The enzyme catalyses cytidine(967) in 16S rRNA + S-adenosyl-L-methionine = 5-methylcytidine(967) in 16S rRNA + S-adenosyl-L-homocysteine + H(+). Specifically methylates the cytosine at position 967 (m5C967) of 16S rRNA. This Escherichia coli (strain SE11) protein is Ribosomal RNA small subunit methyltransferase B.